The primary structure comprises 112 residues: Small ribosomal subunit protein bS6 (112 aa).

This sequence belongs to the bacterial ribosomal protein bS6 family.

Its function is as follows. Binds together with bS18 to 16S ribosomal RNA. This Chlamydia pneumoniae (Chlamydophila pneumoniae) protein is Small ribosomal subunit protein bS6 (rpsF).